The primary structure comprises 80 residues: Acyl carrier protein (80 aa).

In terms of domain architecture, Carrier spans Ser2–Val77. Ser37 is subject to O-(pantetheine 4'-phosphoryl)serine.

This sequence belongs to the acyl carrier protein (ACP) family. 4'-phosphopantetheine is transferred from CoA to a specific serine of apo-ACP by AcpS. This modification is essential for activity because fatty acids are bound in thioester linkage to the sulfhydryl of the prosthetic group.

It localises to the cytoplasm. Its pathway is lipid metabolism; fatty acid biosynthesis. In terms of biological role, carrier of the growing fatty acid chain in fatty acid biosynthesis. In Herminiimonas arsenicoxydans, this protein is Acyl carrier protein.